We begin with the raw amino-acid sequence, 240 residues long: uncharacterized protein (240 aa).

This is an uncharacterized protein from Methanocaldococcus jannaschii (strain ATCC 43067 / DSM 2661 / JAL-1 / JCM 10045 / NBRC 100440) (Methanococcus jannaschii).